A 443-amino-acid chain; its full sequence is Thymidine phosphorylase (443 aa).

The protein belongs to the thymidine/pyrimidine-nucleoside phosphorylase family. As to quaternary structure, homodimer.

The enzyme catalyses thymidine + phosphate = 2-deoxy-alpha-D-ribose 1-phosphate + thymine. It functions in the pathway pyrimidine metabolism; dTMP biosynthesis via salvage pathway; dTMP from thymine: step 1/2. Its function is as follows. The enzymes which catalyze the reversible phosphorolysis of pyrimidine nucleosides are involved in the degradation of these compounds and in their utilization as carbon and energy sources, or in the rescue of pyrimidine bases for nucleotide synthesis. The chain is Thymidine phosphorylase from Aliivibrio fischeri (strain ATCC 700601 / ES114) (Vibrio fischeri).